The following is a 351-amino-acid chain: Ubiquinol oxidase 4, chloroplastic/chromoplastic (351 aa).

A chloroplast and chromoplast-targeting transit peptide spans 1–56 (MAAISGISSGTLTISRPLVTLRRSRAAVSYSSSHRLLHHLPLSSRRLLLRNNHRVQ). Residues 71–91 (ESFKAETSTGTEPLEEPNMSS) form a disordered region. The helical transmembrane segment at 132–152 (FFVLETIARVPYFAFMSVLHM) threads the bilayer. Residues E136, E175, and H178 each coordinate Fe cation. A helical membrane pass occupies residues 195–215 (FLAQHIATFYYFMTVFLYILS). 3 residues coordinate Fe cation: E227, E296, and H299.

This sequence belongs to the alternative oxidase family. Fe cation serves as cofactor. As to expression, ubiquitous.

It localises to the plastid. The protein resides in the chloroplast thylakoid membrane. It is found in the chromoplast membrane. It catalyses the reaction 2 a ubiquinol + O2 = 2 a ubiquinone + 2 H2O. Functionally, acts early in chloroplast biogenesis as a component of a redox chain responsible for phytoene desaturation. Prevents the generation of toxic oxygen radicals and photooxidation of the nascent photosynthetic apparatus. Involved in the differentiation of multiple plastid types, including chloroplasts, amyloplasts, and etioplasts. Might participate in the chloroplast respiratory chain. The polypeptide is Ubiquinol oxidase 4, chloroplastic/chromoplastic (AOX4) (Arabidopsis thaliana (Mouse-ear cress)).